We begin with the raw amino-acid sequence, 482 residues long: Zinc metalloproteinase/disintegrin (482 aa).

Positions 1–20 (MIQVLLVTICLAAFPYQGSS) are cleaved as a signal peptide. Positions 21–189 (MILESGNVND…IKASQLVVTA (169 aa)) are excised as a propeptide. A Peptidase M12B domain is found at 197 to 393 (RYIELVVVAD…HNPQCILNEP (197 aa)). Ca(2+) contacts are provided by Glu200 and Asp284. Cystine bridges form between Cys308–Cys388 and Cys348–Cys372. His333 lines the Zn(2+) pocket. Glu334 is an active-site residue. Zn(2+)-binding residues include His337 and His343. Ca(2+)-binding residues include Cys388 and Asn391. The propeptide occupies 394-409 (LRTDTVSTPVSGNELL). A Disintegrin domain is found at 401-482 (TPVSGNELLE…AGCPRNPFHA (82 aa)). Disulfide bonds link Cys415-Cys430, Cys417-Cys425, Cys424-Cys447, Cys438-Cys444, Cys443-Cys468, and Cys456-Cys475. The Cell attachment site signature appears at 460 to 462 (RGD).

This sequence belongs to the venom metalloproteinase (M12B) family. P-II subfamily. P-IId sub-subfamily. In terms of assembly, homodimer; disulfide-linked (disintegrin). Zn(2+) is required as a cofactor. In terms of tissue distribution, expressed by the venom gland.

It is found in the secreted. Functionally, this recombinant protein hydrolyzes fibronectin, but has no effect on type I gelatin and type I to V collagens. Selectively hydrolyzes the Aalpha-chain of fibrinogen (FGA), but has no effect on fibrin. Inhibits ADP-induced platelet aggregation. Its function is as follows. Recombinant metalloproteinase-disintegrin Mt-d-I (393-408): hydrolyzes type I gelatin, type III and V collagens, but has no effect on type I, II, IV collagens and fibronectin. Selectively hydrolyzes the Aalpha-chain of fibrinogen, but has no effect on fibrin. May induce hemorrhage in vascular tissue. Strongly inhibits ADP-induced platelet aggregation. When concentrated, Mt-d-I undergoes autoproteolytic processing into metalloproteinase and disintegrin. The chain is Zinc metalloproteinase/disintegrin from Gloydius brevicauda (Korean slamosa snake).